Here is a 417-residue protein sequence, read N- to C-terminus: Leucine-rich repeat-containing protein 42 (417 aa).

4 LRR repeats span residues 167–188, 195–215, 227–249, and 252–273; these read CLRSLDLSCCKLGDEHELLEHL, SLTELYLKDNCFSDTGIRKMT, ALKVLDLSSNPGITDRGVLFLFG, and LLQFLDLSDTSIQDRSRTVKKI. The interval 360-399 is disordered; it reads FFRPEEQKDSDSSKSDKRQRSTKRTGADPGQEDCTIAPAT. Residues 362 to 378 show a composition bias toward basic and acidic residues; that stretch reads RPEEQKDSDSSKSDKRQ.

This sequence belongs to the LRRC42 family.

The protein is Leucine-rich repeat-containing protein 42 (lrrc42) of Xenopus tropicalis (Western clawed frog).